A 29-amino-acid chain; its full sequence is Glucagon (29 aa).

This sequence belongs to the glucagon family.

Its subcellular location is the secreted. Its function is as follows. Glucagon plays a key role in glucose metabolism and homeostasis. Regulates blood glucose by increasing gluconeogenesis and decreasing glycolysis. In Meleagris gallopavo (Wild turkey), this protein is Glucagon (GCG).